The sequence spans 760 residues: Cellulose synthase-like protein G1 (760 aa).

A run of 2 helical transmembrane segments spans residues 28–48 (IYAI…VHSL) and 54–74 (TLIT…WATT). Catalysis depends on residues aspartate 142 and aspartate 447. 5 helical membrane-spanning segments follow: residues 530–550 (IPLT…VSVF), 558–578 (FWLY…DFLL), 593–613 (LMIK…LKTL), 656–676 (VAIV…FCGG), and 680–700 (LELM…GAMV).

Belongs to the glycosyltransferase 2 family. Plant cellulose synthase-like G subfamily. As to expression, expressed in young seedlings, primarily in the vascular tissue.

The protein localises to the golgi apparatus membrane. Functionally, thought to be a Golgi-localized beta-glycan synthase that polymerize the backbones of noncellulosic polysaccharides (hemicelluloses) of plant cell wall. The protein is Cellulose synthase-like protein G1 (CSLG1) of Arabidopsis thaliana (Mouse-ear cress).